A 236-amino-acid polypeptide reads, in one-letter code: MNSLSYLNQDQQSFPPPEQALSDPNGLLAVGGDLQPERLLNAYYNGIFPWFNQDDPILWWSPDPRAVFAPGNLRVSRSLIKYLKKQSWTFSINKQFPAVIRGCAAPRAKQEETWISDDIQQAYLSLHQQGHAHSIEVWEDDILIGGLYGLAIGQVFCGESMFHLRTNASKAAMIVLQQHLLRCGFKLIDAQVENPHLDSLGAKSIKRKDFLTLLKHLRDGDVNPDSWLTTEVPIEL.

The span at 1-13 shows a compositional bias: polar residues; it reads MNSLSYLNQDQQS. A disordered region spans residues 1 to 22; the sequence is MNSLSYLNQDQQSFPPPEQALS.

Belongs to the L/F-transferase family.

The protein localises to the cytoplasm. It catalyses the reaction N-terminal L-lysyl-[protein] + L-leucyl-tRNA(Leu) = N-terminal L-leucyl-L-lysyl-[protein] + tRNA(Leu) + H(+). The catalysed reaction is N-terminal L-arginyl-[protein] + L-leucyl-tRNA(Leu) = N-terminal L-leucyl-L-arginyl-[protein] + tRNA(Leu) + H(+). The enzyme catalyses L-phenylalanyl-tRNA(Phe) + an N-terminal L-alpha-aminoacyl-[protein] = an N-terminal L-phenylalanyl-L-alpha-aminoacyl-[protein] + tRNA(Phe). Functionally, functions in the N-end rule pathway of protein degradation where it conjugates Leu, Phe and, less efficiently, Met from aminoacyl-tRNAs to the N-termini of proteins containing an N-terminal arginine or lysine. This Shewanella piezotolerans (strain WP3 / JCM 13877) protein is Leucyl/phenylalanyl-tRNA--protein transferase.